The primary structure comprises 156 residues: Calglandulin (156 aa).

EF-hand domains are found at residues 8-43 (EQIT…IGIN), 44-79 (PTKR…YHEK), 82-117 (NQDE…AGEP), and 118-153 (LNEH…ESFK). Aspartate 131, aspartate 133, aspartate 135, threonine 137, and glutamate 142 together coordinate Ca(2+).

This sequence belongs to the calmodulin family. Calglandulin subfamily. As to expression, expressed by the venom gland.

It localises to the cytoplasm. In terms of biological role, may be involved in the cellular control mechanism of the secretion of toxins from the gland into the venom. The protein is Calglandulin of Hoplocephalus stephensii (Stephens's banded snake).